A 705-amino-acid polypeptide reads, in one-letter code: MLKDLNKVRNIGIMAHIDAGKTTTTERILFYTGINRKVGETHDGGATTDWMEQEKERGITITSAAVTCFWDNNQVNIIDTPGHVDFTVEVERSLRVLDGAVAVFDGKEGVEPQSEQVWRQATKYDVPRICFVNKMDKLGADFYFTVGTIEDRLGAKPLVMQLPIGAEDNFDGVIDLLEMKALTWRGVTPIGTEATVEEIPAELADRAAEYREKLLETVAESDEELMEKYFGGEELSIAEIKAAIRKMVVNSEIYPVYCGTAYKNKGIQPLLDAVVDFLPSPLDLGETKGTDVKDPEKVLTRKPSDEEPLSALAFKIAAHPFFGKLTFVRLYSGKVEPGEQVLNSTKNKKERIGKLFQMHANKENPVEVAHAGNIYAFIGLKDTTTGDTLCDANAPIILESMDFPDPVIQVAIEPKTKSDQEKLGVAIQKLAEEDPTFTVHLDDESGQTVIGGMGELHLDVLVDRMKREFKVEANIGDPQVAYRETIRKPVESLSYTHKKQTGGSGQFAKVIITIEPYAPEADELEEGESAIYKFENAVTGGRVPREYIPSVDAGIQDAMQYGFLAGYPLVNVKATLEDGAYHDVDSSEMAFKLAGSQAFKEAVAKAKPVLLEPIMSVEITTPEEYMGEVIGDVNSRRGQIASMDDRAGAKLVKAKVPLSQMFGYVGDLRSKTQGRANYSMVFDSYAEVPANVAADVIAERNGTAS.

The tr-type G domain maps to 6 to 282; that stretch reads NKVRNIGIMA…AVVDFLPSPL (277 aa). GTP is bound by residues 15–22, 79–83, and 133–136; these read AHIDAGKT, DTPGH, and NKMD.

It belongs to the TRAFAC class translation factor GTPase superfamily. Classic translation factor GTPase family. EF-G/EF-2 subfamily.

It is found in the cytoplasm. Functionally, catalyzes the GTP-dependent ribosomal translocation step during translation elongation. During this step, the ribosome changes from the pre-translocational (PRE) to the post-translocational (POST) state as the newly formed A-site-bound peptidyl-tRNA and P-site-bound deacylated tRNA move to the P and E sites, respectively. Catalyzes the coordinated movement of the two tRNA molecules, the mRNA and conformational changes in the ribosome. This is Elongation factor G from Corynebacterium glutamicum (strain ATCC 13032 / DSM 20300 / JCM 1318 / BCRC 11384 / CCUG 27702 / LMG 3730 / NBRC 12168 / NCIMB 10025 / NRRL B-2784 / 534).